The following is a 109-amino-acid chain: Peptide chaperone MftB (109 aa).

The protein belongs to the peptide chaperone MftB family. Interacts with MftA and MftC.

Its function is as follows. Peptide chaperone involved in the biosynthesis of the enzyme cofactor mycofactocin (MFT). Binds MftA and MftC with high affinity, and is essential for MftC activity on MftA, likely via the formation of a ternary complex. This chain is Peptide chaperone MftB, found in Mycobacterium ulcerans (strain Agy99).